The sequence spans 445 residues: Phosphoglucosamine mutase (445 aa).

S102 acts as the Phosphoserine intermediate in catalysis. Residues S102, D241, D243, and D245 each contribute to the Mg(2+) site. Residue S102 is modified to Phosphoserine.

It belongs to the phosphohexose mutase family. Mg(2+) serves as cofactor. In terms of processing, activated by phosphorylation.

The enzyme catalyses alpha-D-glucosamine 1-phosphate = D-glucosamine 6-phosphate. Its function is as follows. Catalyzes the conversion of glucosamine-6-phosphate to glucosamine-1-phosphate. This is Phosphoglucosamine mutase from Shigella dysenteriae serotype 1 (strain Sd197).